The chain runs to 403 residues: Casein kinase II subunit alpha-2 (403 aa).

The first 31 residues, 1 to 31 (MHLIFFFSYFLRRYLLLLCAILILRAPLAHS), serve as a signal peptide directing secretion. In terms of domain architecture, Protein kinase spans 104–389 (YEVVRKVGRG…AKEAMAHPYF (286 aa)). Residues 110-118 (VGRGKYSEV) and Lys-133 each bind ATP. N-linked (GlcNAc...) asparagine glycosylation is present at Asn-182. The active-site Proton acceptor is the Asp-221.

The protein belongs to the protein kinase superfamily. Ser/Thr protein kinase family. CK2 subfamily. As to quaternary structure, heterotetramer of two catalytic alpha subunits and two regulatory beta subunits. In terms of tissue distribution, seems to be present in all plant organs. But seems to be more expressed than CKA1.

The protein resides in the nucleus. The protein localises to the nucleolus. It carries out the reaction L-seryl-[protein] + ATP = O-phospho-L-seryl-[protein] + ADP + H(+). The enzyme catalyses L-threonyl-[protein] + ATP = O-phospho-L-threonyl-[protein] + ADP + H(+). Functionally, casein kinases are operationally defined by their preferential utilization of acidic proteins such as caseins as substrates. The alpha chain contains the catalytic site. The tetrameric holoenzyme CK2, composed of two alpha and two beta subunits, phosphorylates the transcription factor PIF1 after an exposure to light, resulting in a proteasome-dependent degradation of PIF1 and promotion of photomorphogenesis. CK2 phosphorylates translation initiation factors. May participate in the regulation of the initiation of translation. Acts as circadian clock component that maintains the correct period length through phosphorylation of CCA1. May act as an ectokinase that phosphorylates several extracellular proteins. In Arabidopsis thaliana (Mouse-ear cress), this protein is Casein kinase II subunit alpha-2.